The primary structure comprises 233 residues: MDIYEHKKSFMERQIRLLNRPMRPPKDWKLPLKSGQLSESVVETVFQRLQLRIQKHAKLNYSHQATQHVAAQIRKLYEQNSAIEDITFLNPLFYGEIDLSNLDSVKSLPHPWPFQKESRPVEKDEEQEKFNRLTGELLGLLTTLSELEQERSELEQIEKMLEPFEDGPSSIHTNMWKKNPELISTLNSTNTMVAKINSLLRGVSFPSLNNDNQEASLEDEIRSQLFEKTISDD.

2 positions are modified to phosphothreonine: T189 and T191.

It belongs to the NKP1 family. Component of the inner kinetochore constitutive centromere-associated network (CCAN) (also known as central kinetochore Sim4 complex in fission yeast), which is composed of at least cnl2, cnp3, cnp20, fta1, fta2, fta3, fta4, fta6, fta7, mal2, mhf1, mhf2, mis6, mis15, mis17, sim4 and wip1.

Its subcellular location is the nucleus. The protein resides in the chromosome. It is found in the centromere. The protein localises to the kinetochore. Functionally, component of the kinetochore, a multiprotein complex that assembles on centromeric DNA and attaches chromosomes to spindle microtubules, mediating chromosome segregation and sister chromatid segregation during meiosis and mitosis. Component of the inner kinetochore constitutive centromere-associated network (CCAN), which serves as a structural platform for outer kinetochore assembly. Fta2, fta3 and fta4 associate with the central core (cnt) and inner repeat (inr) region of the centromere. The sequence is that of Inner kinetochore subunit fta4 (fta4) from Schizosaccharomyces pombe (strain 972 / ATCC 24843) (Fission yeast).